A 97-amino-acid chain; its full sequence is MERKEHCFCKEKQFSYGLSMWRNIGRFLSWSTCPHSNVIMEFFHVLQKQKEDLCITYGIVLEGAEAKKWGEIIGTELSKDMPTAVSRLVHLYGGVIK.

This is an uncharacterized protein from Bacillus subtilis (strain 168).